The sequence spans 180 residues: MGIDISHRNKRKVVRRNPKSGDVYLRLMVKLYKFLARRTHSKFNNIVKRRLFMSRINRAPLSLSRLTRQMKKPGREGKIAVVIGTVTNDIRMREVPKLTVCALRVTAGARTRILKAGGKVMTVDQLALKAPLGKGTVLLQGPRKAREACRHFGPAPGVPGSHTKPYVISKSRERTNAHRA.

Residues 152–180 form a disordered region; the sequence is FGPAPGVPGSHTKPYVISKSRERTNAHRA. Over residues 170–180 the composition is skewed to basic and acidic residues; the sequence is KSRERTNAHRA.

This sequence belongs to the eukaryotic ribosomal protein eL18 family.

The protein resides in the cytoplasm. In Taenia asiatica (Asian tapeworm), this protein is Large ribosomal subunit protein eL18 (RPL18).